A 60-amino-acid chain; its full sequence is Large ribosomal subunit protein bL32 (60 aa).

Residues 1-60 (MAVQQNKKSPSKRGMHRSHDFLVNPSTAIEPTTGETHLRHHISPNGFYRGRKVLKTKADE) form a disordered region. Positions 24-35 (NPSTAIEPTTGE) are enriched in polar residues. A compositionally biased stretch (basic residues) spans 49–60 (RGRKVLKTKADE).

The protein belongs to the bacterial ribosomal protein bL32 family.

The protein is Large ribosomal subunit protein bL32 of Bordetella petrii (strain ATCC BAA-461 / DSM 12804 / CCUG 43448).